Consider the following 62-residue polypeptide: Potassium channel toxin kappa-KTx 3.2 (62 aa).

The signal sequence occupies residues 1-26 (MKSTLMTASLLILVLLSIVDYASVYA). The propeptide occupies 27–36 (ELIDSEISME). Cystine bridges form between Cys43/Cys61 and Cys47/Cys57.

The protein belongs to the short scorpion toxin superfamily. Potassium channel inhibitor kappa-KTx family. Kappa-KTx 3 subfamily. In terms of tissue distribution, expressed by the venom gland.

It is found in the secreted. Its function is as follows. Potassium channel inhibitor (Kv). This Heterometrus petersii (Asian forest scorpion) protein is Potassium channel toxin kappa-KTx 3.2.